The following is a 530-amino-acid chain: Bifunctional purine biosynthesis protein PurH (530 aa).

In terms of domain architecture, MGS-like spans 1–148 (MNNARPIHRA…KNHKDVAIVV (148 aa)).

The protein belongs to the PurH family.

It carries out the reaction (6R)-10-formyltetrahydrofolate + 5-amino-1-(5-phospho-beta-D-ribosyl)imidazole-4-carboxamide = 5-formamido-1-(5-phospho-D-ribosyl)imidazole-4-carboxamide + (6S)-5,6,7,8-tetrahydrofolate. The catalysed reaction is IMP + H2O = 5-formamido-1-(5-phospho-D-ribosyl)imidazole-4-carboxamide. It functions in the pathway purine metabolism; IMP biosynthesis via de novo pathway; 5-formamido-1-(5-phospho-D-ribosyl)imidazole-4-carboxamide from 5-amino-1-(5-phospho-D-ribosyl)imidazole-4-carboxamide (10-formyl THF route): step 1/1. The protein operates within purine metabolism; IMP biosynthesis via de novo pathway; IMP from 5-formamido-1-(5-phospho-D-ribosyl)imidazole-4-carboxamide: step 1/1. The chain is Bifunctional purine biosynthesis protein PurH from Vibrio cholerae serotype O1 (strain M66-2).